Reading from the N-terminus, the 34-residue chain is Photosystem II reaction center protein M (34 aa).

A helical membrane pass occupies residues 5–25 (ILAVIATALFVLIPTAFLLIL).

This sequence belongs to the PsbM family. As to quaternary structure, PSII is composed of 1 copy each of membrane proteins PsbA, PsbB, PsbC, PsbD, PsbE, PsbF, PsbH, PsbI, PsbJ, PsbK, PsbL, PsbM, PsbT, PsbX, PsbY, PsbZ, Psb30/Ycf12, at least 3 peripheral proteins of the oxygen-evolving complex and a large number of cofactors. It forms dimeric complexes.

The protein resides in the plastid. It localises to the chloroplast thylakoid membrane. In terms of biological role, one of the components of the core complex of photosystem II (PSII). PSII is a light-driven water:plastoquinone oxidoreductase that uses light energy to abstract electrons from H(2)O, generating O(2) and a proton gradient subsequently used for ATP formation. It consists of a core antenna complex that captures photons, and an electron transfer chain that converts photonic excitation into a charge separation. This subunit is found at the monomer-monomer interface. This chain is Photosystem II reaction center protein M, found in Chaetosphaeridium globosum (Charophycean green alga).